A 347-amino-acid polypeptide reads, in one-letter code: Heat-inducible transcription repressor HrcA (347 aa).

Belongs to the HrcA family.

Its function is as follows. Negative regulator of class I heat shock genes (grpE-dnaK-dnaJ and groELS operons). Prevents heat-shock induction of these operons. This Lactococcus lactis subsp. cremoris (strain MG1363) protein is Heat-inducible transcription repressor HrcA.